Here is a 185-residue protein sequence, read N- to C-terminus: Threonylcarbamoyl-AMP synthase (185 aa).

One can recognise a YrdC-like domain in the interval 4–185 (SWRVQQAARE…LATGKVVRPS (182 aa)).

Belongs to the SUA5 family. TsaC subfamily.

The protein resides in the cytoplasm. It carries out the reaction L-threonine + hydrogencarbonate + ATP = L-threonylcarbamoyladenylate + diphosphate + H2O. Functionally, required for the formation of a threonylcarbamoyl group on adenosine at position 37 (t(6)A37) in tRNAs that read codons beginning with adenine. Catalyzes the conversion of L-threonine, HCO(3)(-)/CO(2) and ATP to give threonylcarbamoyl-AMP (TC-AMP) as the acyladenylate intermediate, with the release of diphosphate. In Pseudomonas fluorescens (strain ATCC BAA-477 / NRRL B-23932 / Pf-5), this protein is Threonylcarbamoyl-AMP synthase.